A 310-amino-acid chain; its full sequence is Pantoate--beta-alanine ligase (310 aa).

32–39 (MGYLHEGH) is a binding site for ATP. Catalysis depends on His-39, which acts as the Proton donor. Gln-63 serves as a coordination point for (R)-pantoate. Gln-63 contributes to the beta-alanine binding site. 175–178 (GKKD) lines the ATP pocket. (R)-pantoate is bound at residue Gln-181. Position 212-215 (212-215 (MSSR)) interacts with ATP.

This sequence belongs to the pantothenate synthetase family. Homodimer. Expressed in roots, cotyledons, leaves, stems, cauline leaves, stigma, sepals and petals.

The protein localises to the cytoplasm. It localises to the cytosol. The enzyme catalyses (R)-pantoate + beta-alanine + ATP = (R)-pantothenate + AMP + diphosphate + H(+). It functions in the pathway cofactor biosynthesis; (R)-pantothenate biosynthesis; (R)-pantothenate from (R)-pantoate and beta-alanine: step 1/1. With respect to regulation, enzyme kinetics do not match Michaelis-Menten kinetics, suggesting allosteric behavior. Inhibited by high pantoate levels. Catalyzes the condensation of pantoate with beta-alanine to form pantothenate. Essential for panthotenate biosynthesis. The chain is Pantoate--beta-alanine ligase from Arabidopsis thaliana (Mouse-ear cress).